Consider the following 265-residue polypeptide: Type III pantothenate kinase (265 aa).

Residue 6 to 13 (DVGNTNIV) coordinates ATP. 112 to 115 (GADR) contributes to the substrate binding site. Aspartate 114 (proton acceptor) is an active-site residue. A K(+)-binding site is contributed by aspartate 134. Threonine 137 is an ATP binding site. Threonine 189 contacts substrate.

It belongs to the type III pantothenate kinase family. In terms of assembly, homodimer. Requires NH4(+) as cofactor. It depends on K(+) as a cofactor.

It is found in the cytoplasm. It carries out the reaction (R)-pantothenate + ATP = (R)-4'-phosphopantothenate + ADP + H(+). It functions in the pathway cofactor biosynthesis; coenzyme A biosynthesis; CoA from (R)-pantothenate: step 1/5. Functionally, catalyzes the phosphorylation of pantothenate (Pan), the first step in CoA biosynthesis. The polypeptide is Type III pantothenate kinase (Saccharopolyspora erythraea (strain ATCC 11635 / DSM 40517 / JCM 4748 / NBRC 13426 / NCIMB 8594 / NRRL 2338)).